The chain runs to 175 residues: RNA pyrophosphohydrolase (175 aa).

The Nudix hydrolase domain maps to 6–149 (GYRPNVGIVI…KRDVYRRVMK (144 aa)). The Nudix box signature appears at 38-59 (GGINPGETAEQAMYRELFEEVG).

The protein belongs to the Nudix hydrolase family. RppH subfamily. The cofactor is a divalent metal cation.

In terms of biological role, accelerates the degradation of transcripts by removing pyrophosphate from the 5'-end of triphosphorylated RNA, leading to a more labile monophosphorylated state that can stimulate subsequent ribonuclease cleavage. The chain is RNA pyrophosphohydrolase from Serratia proteamaculans (strain 568).